A 203-amino-acid polypeptide reads, in one-letter code: MSEHRIPVAADKKISPPISAGEQKGCKGLKRTDLMLRFAAFVCCTVTMVVLITDKQTSAIQVPGFNNLTITKTVSFDLAKAFVYLVSAAGIGAGYTLLVLVLSIISAERSKAIAWFIFVFDQLITYVLLAAAAASTEVAYMGAHAPPEASWLKVCSLFGRFCHQLGASLVTSLISTVLFAFSAAISAYYLFSNTNVRPAYSKG.

The Cytoplasmic segment spans residues 1-31 (MSEHRIPVAADKKISPPISAGEQKGCKGLKR). A helical membrane pass occupies residues 32 to 52 (TDLMLRFAAFVCCTVTMVVLI). At 53-84 (TDKQTSAIQVPGFNNLTITKTVSFDLAKAFVY) the chain is on the extracellular side. N-linked (GlcNAc...) asparagine glycosylation occurs at asparagine 67. A helical membrane pass occupies residues 85-105 (LVSAAGIGAGYTLLVLVLSII). At 106–111 (SAERSK) the chain is on the cytoplasmic side. A helical membrane pass occupies residues 112–132 (AIAWFIFVFDQLITYVLLAAA). The Extracellular segment spans residues 133-164 (AASTEVAYMGAHAPPEASWLKVCSLFGRFCHQ). Residues 165–185 (LGASLVTSLISTVLFAFSAAI) traverse the membrane as a helical segment. The Cytoplasmic segment spans residues 186–203 (SAYYLFSNTNVRPAYSKG).

Belongs to the Casparian strip membrane proteins (CASP) family. As to quaternary structure, homodimer and heterodimers.

Its subcellular location is the cell membrane. The sequence is that of CASP-like protein 2U6 from Selaginella moellendorffii (Spikemoss).